The primary structure comprises 407 residues: SERPINE1 mRNA-binding protein 1 (407 aa).

Phosphoserine is present on Ser25. Positions 33–227 (AAENKKKEAG…GSGSHNWGTV (195 aa)) are disordered. A compositionally biased stretch (low complexity) spans 51–68 (AKSAAQAAAQTNSNAAGK). Lys52 is modified (N6-acetyllysine; alternate). Residue Lys52 forms a Glycyl lysine isopeptide (Lys-Gly) (interchain with G-Cter in SUMO1); alternate linkage. Lys68 carries the N6-acetyllysine modification. Basic and acidic residues-rich tracts occupy residues 70 to 80 (LRKESQKDRKN), 89 to 114 (ADKK…RRPD), and 122 to 162 (KLID…ERPI). Lys102 is covalently cross-linked (Glycyl lysine isopeptide (Lys-Gly) (interchain with G-Cter in SUMO2)). 2 positions are modified to N6-acetyllysine: Lys122 and Lys140. The segment covering 164–182 (GRGGLGRGRGGRGRGMGRG) has biased composition (gly residues). 2 positions are modified to omega-N-methylarginine: Arg165 and Arg188. Positions 183 to 199 (DGFDSRGKREFDRHSGS) are enriched in basic and acidic residues. Ser197, Ser199, Ser203, Ser205, and Ser208 each carry phosphoserine. An N6-acetyllysine; alternate modification is found at Lys211. Lys211 participates in a covalent cross-link: Glycyl lysine isopeptide (Lys-Gly) (interchain with G-Cter in SUMO2); alternate. Arg216 is modified (omega-N-methylarginine). Ser221 is modified (phosphoserine). Position 226 is a phosphothreonine (Thr226). A Glycyl lysine isopeptide (Lys-Gly) (interchain with G-Cter in SUMO1); alternate cross-link involves residue Lys228. Lys228 is covalently cross-linked (Glycyl lysine isopeptide (Lys-Gly) (interchain with G-Cter in SUMO2); alternate). Leu231, Ser234, and Tyr237 each carry phosphoserine. Phosphothreonine is present on Ser234. Lys240 carries the post-translational modification Phosphothreonine. A compositionally biased stretch (polar residues) spans 242–256 (ISYNCSDLDQSNVTE). Disordered regions lie at residues 242-288 (ISYN…KEMT) and 327-407 (SKSE…PALA). A compositionally biased stretch (basic and acidic residues) spans 261–274 (GEEHPVADTENKEN). Lys280 is covalently cross-linked (Glycyl lysine isopeptide (Lys-Gly) (interchain with G-Cter in SUMO2)). The segment covering 327–341 (SKSEEAHAEDSVMDH) has biased composition (basic and acidic residues). Position 328 is an N6-acetyllysine (Lys328). Phosphoserine is present on Ser329. Gly residues predominate over residues 362–371 (GRPGRGGRGG). Residues Arg363, Arg366, and Arg369 each carry the omega-N-methylarginine modification. Phosphoserine occurs at positions 391 and 393.

This sequence belongs to the SERBP1-HABP4 family. As to quaternary structure, associates with mature 80S ribosomes. Interacts with EEF2/eEF2; interaction sequesters EEF2/eEF2 at the A-site of the ribosome, thereby blocking the interaction sites of the mRNA-tRNA complex, promoting ribosome stabilization and hibernation. Interacts with SPIN1. Interacts with CHD3 and TDRD3. Interacts with ZDHHC17 (via ANK repeats). In terms of processing, phosphorylation by MTOR inhibits SERBP1 and relieves ribosome hibernation.

Its subcellular location is the cytoplasm. It localises to the nucleus. It is found in the perinuclear region. Functionally, ribosome-binding protein that promotes ribosome hibernation, a process during which ribosomes are stabilized in an inactive state and preserved from proteasomal degradation. Acts via its association with EEF2/eEF2 factor, sequestering EEF2/eEF2 at the A-site of the ribosome and promoting ribosome stabilization and storage in an inactive state. May also play a role in the regulation of mRNA stability: binds to the 3'-most 134 nt of the SERPINE1/PAI1 mRNA, a region which confers cyclic nucleotide regulation of message decay. Seems to play a role in PML-nuclear bodies formation. In Mus musculus (Mouse), this protein is SERPINE1 mRNA-binding protein 1.